Consider the following 109-residue polypeptide: Transcription initiation factor IIA subunit 2 (109 aa).

Belongs to the TFIIA subunit 2 family. In terms of assembly, TFIIA is a heterodimer of the large unprocessed subunit 1 and a small subunit gamma. It was originally believed to be a heterotrimer of an alpha (p35), a beta (p19) and a gamma subunit (p12). Interacts with NCOA6 general coactivator. TFIIA forms a complex with TBP. Interacts with HSF1 (via transactivation domain). Part of TBP-based Pol II pre-initiation complex (PIC), in which Pol II core assembles with general transcription factors and other specific initiation factors including GTF2E1, GTF2E2, GTF2F1, GTF2F2, TCEA1, ERCC2, ERCC3, GTF2H2, GTF2H3, GTF2H4, GTF2H5, GTF2A1, GTF2A2, GTF2B and TBP; this large multi-subunit PIC complex mediates DNA unwinding and targets Pol II core to the transcription start site where the first phosphodiester bond forms.

Its subcellular location is the nucleus. In terms of biological role, TFIIA is a component of the transcription machinery of RNA polymerase II and plays an important role in transcriptional activation. TFIIA in a complex with TBP mediates transcriptional activity. This Rattus norvegicus (Rat) protein is Transcription initiation factor IIA subunit 2 (Gtf2a2).